Consider the following 207-residue polypeptide: Guanylate kinase (207 aa).

Residues glycine 6–glutamate 185 form the Guanylate kinase-like domain. Glycine 13–glycine 20 contributes to the ATP binding site.

This sequence belongs to the guanylate kinase family.

The protein localises to the cytoplasm. It catalyses the reaction GMP + ATP = GDP + ADP. Essential for recycling GMP and indirectly, cGMP. The polypeptide is Guanylate kinase (Staphylococcus haemolyticus (strain JCSC1435)).